The primary structure comprises 177 residues: Photosystem I assembly protein Ycf4 (177 aa).

A run of 2 helical transmembrane segments spans residues 20-40 (VALLVSIGGVGFLLTSASSYF) and 60-80 (LVMGAYGVGAVLLSSYLWAVI).

The protein belongs to the Ycf4 family.

Its subcellular location is the cellular thylakoid membrane. Its function is as follows. Seems to be required for the assembly of the photosystem I complex. The protein is Photosystem I assembly protein Ycf4 of Synechococcus sp. (strain RCC307).